A 202-amino-acid polypeptide reads, in one-letter code: Na(+)-translocating NADH-quinone reductase subunit E (202 aa).

6 helical membrane-spanning segments follow: residues 11–31 (SVFI…FIAV), 35–55 (IETA…TVPA), 81–101 (FIAL…LEMV), 114–134 (GIFL…LFMI), 144–164 (VVYG…MAGV), and 180–200 (LGIT…FSGI).

The protein belongs to the NqrDE/RnfAE family. As to quaternary structure, composed of six subunits; NqrA, NqrB, NqrC, NqrD, NqrE and NqrF.

The protein resides in the cell inner membrane. It carries out the reaction a ubiquinone + n Na(+)(in) + NADH + H(+) = a ubiquinol + n Na(+)(out) + NAD(+). NQR complex catalyzes the reduction of ubiquinone-1 to ubiquinol by two successive reactions, coupled with the transport of Na(+) ions from the cytoplasm to the periplasm. NqrA to NqrE are probably involved in the second step, the conversion of ubisemiquinone to ubiquinol. This is Na(+)-translocating NADH-quinone reductase subunit E from Methylococcus capsulatus (strain ATCC 33009 / NCIMB 11132 / Bath).